The chain runs to 282 residues: Putative 4-diphosphocytidyl-2-C-methyl-D-erythritol kinase (282 aa).

Lys9 is a catalytic residue. ATP is bound at residue 93-103; sequence PVSAGLAGGSA. Asp135 is an active-site residue.

This sequence belongs to the GHMP kinase family. IspE subfamily.

It catalyses the reaction 4-CDP-2-C-methyl-D-erythritol + ATP = 4-CDP-2-C-methyl-D-erythritol 2-phosphate + ADP + H(+). In terms of biological role, catalyzes the phosphorylation of the position 2 hydroxy group of 4-diphosphocytidyl-2C-methyl-D-erythritol. The polypeptide is Putative 4-diphosphocytidyl-2-C-methyl-D-erythritol kinase (Staphylococcus haemolyticus (strain JCSC1435)).